A 429-amino-acid polypeptide reads, in one-letter code: Adenylosuccinate synthetase (429 aa).

GTP is bound by residues 12-18 and 40-42; these read GDEGKGK and GHT. Asp-13 acts as the Proton acceptor in catalysis. Mg(2+) contacts are provided by Asp-13 and Gly-40. IMP is bound by residues 13–16, 38–41, Thr-128, Arg-142, Gln-223, Thr-238, and Arg-302; these read DEGK and NAGH. Catalysis depends on His-41, which acts as the Proton donor. Position 298–304 (298–304) interacts with substrate; sequence TTTGRPR. GTP contacts are provided by residues Arg-304, 330 to 332, and 412 to 414; these read SID and SVG.

The protein belongs to the adenylosuccinate synthetase family. In terms of assembly, homodimer. The cofactor is Mg(2+).

The protein localises to the cytoplasm. The enzyme catalyses IMP + L-aspartate + GTP = N(6)-(1,2-dicarboxyethyl)-AMP + GDP + phosphate + 2 H(+). Its pathway is purine metabolism; AMP biosynthesis via de novo pathway; AMP from IMP: step 1/2. In terms of biological role, plays an important role in the de novo pathway of purine nucleotide biosynthesis. Catalyzes the first committed step in the biosynthesis of AMP from IMP. This is Adenylosuccinate synthetase from Bacillus thuringiensis (strain Al Hakam).